Consider the following 355-residue polypeptide: 3-isopropylmalate dehydrogenase (355 aa).

The substrate site is built by R90, R100, R128, and D222. Mg(2+)-binding residues include D222, D246, and D250. 280-292 (GSAPDIAGKGIAN) contributes to the NAD(+) binding site.

Belongs to the isocitrate and isopropylmalate dehydrogenases family. LeuB type 1 subfamily. In terms of assembly, homodimer. Requires Mg(2+) as cofactor. Mn(2+) is required as a cofactor.

Its subcellular location is the cytoplasm. The catalysed reaction is (2R,3S)-3-isopropylmalate + NAD(+) = 4-methyl-2-oxopentanoate + CO2 + NADH. It participates in amino-acid biosynthesis; L-leucine biosynthesis; L-leucine from 3-methyl-2-oxobutanoate: step 3/4. In terms of biological role, catalyzes the oxidation of 3-carboxy-2-hydroxy-4-methylpentanoate (3-isopropylmalate) to 3-carboxy-4-methyl-2-oxopentanoate. The product decarboxylates to 4-methyl-2 oxopentanoate. This chain is 3-isopropylmalate dehydrogenase, found in Burkholderia mallei (strain ATCC 23344).